The following is a 295-amino-acid chain: Manganese transport system membrane protein MntD (295 aa).

The next 9 helical transmembrane spans lie at 7 to 27 (IIAT…FLVL), 42 to 62 (LLGI…YMFI), 63 to 83 (GAAA…SKGV), 87 to 107 (AAIG…LSVY), 138 to 158 (IGPK…VLIS), 174 to 194 (ALAL…MLSL), 203 to 223 (VGAV…HLLT), 227 to 247 (LYML…GYFF), and 253 to 273 (VSIS…AFLF).

The protein belongs to the ABC-3 integral membrane protein family. The complex is probably composed of two ATP-binding proteins (MntB), two transmembrane proteins (MntC and MntD) and a solute-binding protein (MntA).

The protein resides in the cell membrane. Probably part of the ABC transporter complex MntABCD involved in manganese import. Probably responsible for the translocation of the substrate across the membrane. This is Manganese transport system membrane protein MntD from Bacillus subtilis (strain 168).